The chain runs to 246 residues: 1-(5-phosphoribosyl)-5-[(5-phosphoribosylamino)methylideneamino] imidazole-4-carboxamide isomerase (246 aa).

Asp10 acts as the Proton acceptor in catalysis.

The protein belongs to the HisA/HisF family.

The protein resides in the cytoplasm. The enzyme catalyses 1-(5-phospho-beta-D-ribosyl)-5-[(5-phospho-beta-D-ribosylamino)methylideneamino]imidazole-4-carboxamide = 5-[(5-phospho-1-deoxy-D-ribulos-1-ylimino)methylamino]-1-(5-phospho-beta-D-ribosyl)imidazole-4-carboxamide. It participates in amino-acid biosynthesis; L-histidine biosynthesis; L-histidine from 5-phospho-alpha-D-ribose 1-diphosphate: step 4/9. This is 1-(5-phosphoribosyl)-5-[(5-phosphoribosylamino)methylideneamino] imidazole-4-carboxamide isomerase from Corynebacterium efficiens (strain DSM 44549 / YS-314 / AJ 12310 / JCM 11189 / NBRC 100395).